The following is a 154-amino-acid chain: Myoglobin (154 aa).

One can recognise a Globin domain in the interval 2–148 (GLSDDEWNHV…FRNDMASKYK (147 aa)). H65 is a nitrite binding site. O2 is bound at residue H65. H94 serves as a coordination point for heme b.

Belongs to the globin family. As to quaternary structure, monomeric.

The protein resides in the cytoplasm. The protein localises to the sarcoplasm. It catalyses the reaction Fe(III)-heme b-[protein] + nitric oxide + H2O = Fe(II)-heme b-[protein] + nitrite + 2 H(+). The enzyme catalyses H2O2 + AH2 = A + 2 H2O. In terms of biological role, monomeric heme protein which primary function is to store oxygen and facilitate its diffusion within muscle tissues. Reversibly binds oxygen through a pentacoordinated heme iron and enables its timely and efficient release as needed during periods of heightened demand. Depending on the oxidative conditions of tissues and cells, and in addition to its ability to bind oxygen, it also has a nitrite reductase activity whereby it regulates the production of bioactive nitric oxide. Under stress conditions, like hypoxia and anoxia, it also protects cells against reactive oxygen species thanks to its pseudoperoxidase activity. In Chelonia mydas (Green sea-turtle), this protein is Myoglobin (MB).